Here is a 463-residue protein sequence, read N- to C-terminus: Putative sodium-coupled neutral amino acid transporter 11 (463 aa).

Residues 1–27 are disordered; sequence MGYPGQRPVIPPQSHRDDRETLVSEHK. Positions 14 to 25 are enriched in basic and acidic residues; it reads SHRDDRETLVSE. A run of 11 helical transmembrane segments spans residues 38-58, 65-85, 105-125, 150-170, 178-198, 225-245, 256-276, 298-320, 336-356, 358-378, and 397-417; these read AVFN…PYSM, LGIL…ILLI, GFPG…IAMI, LLIG…LPLS, LGKI…IVVA, VGVM…YGSL, IIHV…TCGY, VTFG…CFVT, VCHI…SLLI, CLGI…IFII, and IMSC…FVMA. N-linked (GlcNAc...) asparagine glycans are attached at residues N437, N442, and N458.

The protein belongs to the amino acid/polyamine transporter 2 family.

The protein localises to the membrane. Its function is as follows. Putative sodium-dependent amino acid/proton antiporter. The polypeptide is Putative sodium-coupled neutral amino acid transporter 11 (SLC38A11) (Bos taurus (Bovine)).